The following is a 77-amino-acid chain: U8-lycotoxin-Ls1n (77 aa).

An N-terminal signal peptide occupies residues 1 to 20 (MKLMIFTGLVLFAIVSLIEA). Residues 21–26 (QAENEK) constitute a propeptide that is removed on maturation.

This sequence belongs to the neurotoxin 19 (CSTX) family. 08 (U8-Lctx) subfamily. Post-translationally, contains 4 disulfide bonds. Expressed by the venom gland.

The protein resides in the secreted. This is U8-lycotoxin-Ls1n from Lycosa singoriensis (Wolf spider).